The following is a 392-amino-acid chain: Cyclic di-GMP phosphodiesterase RocR (392 aa).

One can recognise a Response regulatory domain in the interval 5-126; sequence NVLVLEDEPF…RITALLTRYN (122 aa). Aspartate 56 carries the 4-aspartylphosphate modification. Residues 140 to 392 enclose the EAL domain; the sequence is ELPSVADVVR…QHFLDYCSGS (253 aa). Positions 175, 233, 265, and 295 each coordinate Mg(2+). The Proton acceptor role is filled by glutamate 352.

In terms of assembly, homotetramer. Exhibits a highly unusual tetrameric structure arranged around a single dyad, with the four subunits adopting two distinctly different conformations, with only two active sites accessible for substrate binding. Interacts with RocS1. Mg(2+) serves as cofactor.

The enzyme catalyses 3',3'-c-di-GMP + H2O = 5'-phosphoguanylyl(3'-&gt;5')guanosine + H(+). With respect to regulation, phosphorylation of Asp-56 probably induces local conformational changes in the response regulatory domain. These structural changes are transmitted to the adjacent EAL domain, then the signal is further transmitted down to the active site. The phosphodiesterase activity is inhibited by Ca(2+) and Zn(2+). Phosphodiesterase activity is inhibited by a benzoisothiazolinone derivative that specifically inhibited RocR, but not some other phosphodiesterases. Phosphodiesterase (PDE) that catalyzes the hydrolysis of cyclic diguanylate (c-di-GMP) to 5'-pGpG. Cannot use cyclic AMP or cyclic GMP. Part of the RocSAR two-component regulatory signaling system (also known as the SadARS system), which regulates biofilm maturation, type III secretion and expression of the cup fimbrial-gene cluster. Negatively regulates the expression of cup genes by antagonizing the activity of RocA1. The polypeptide is Cyclic di-GMP phosphodiesterase RocR (Pseudomonas aeruginosa (strain ATCC 15692 / DSM 22644 / CIP 104116 / JCM 14847 / LMG 12228 / 1C / PRS 101 / PAO1)).